The chain runs to 282 residues: Bifunctional protein FolD (282 aa).

NADP(+)-binding positions include 164 to 166 (GRS) and S189.

This sequence belongs to the tetrahydrofolate dehydrogenase/cyclohydrolase family. Homodimer.

The enzyme catalyses (6R)-5,10-methylene-5,6,7,8-tetrahydrofolate + NADP(+) = (6R)-5,10-methenyltetrahydrofolate + NADPH. It catalyses the reaction (6R)-5,10-methenyltetrahydrofolate + H2O = (6R)-10-formyltetrahydrofolate + H(+). Its pathway is one-carbon metabolism; tetrahydrofolate interconversion. Functionally, catalyzes the oxidation of 5,10-methylenetetrahydrofolate to 5,10-methenyltetrahydrofolate and then the hydrolysis of 5,10-methenyltetrahydrofolate to 10-formyltetrahydrofolate. This is Bifunctional protein FolD from Anaeromyxobacter dehalogenans (strain 2CP-C).